The chain runs to 282 residues: Bifunctional protein FolD (282 aa).

NADP(+) contacts are provided by residues 167 to 169 and serine 192; that span reads GRS.

This sequence belongs to the tetrahydrofolate dehydrogenase/cyclohydrolase family. As to quaternary structure, homodimer.

The catalysed reaction is (6R)-5,10-methylene-5,6,7,8-tetrahydrofolate + NADP(+) = (6R)-5,10-methenyltetrahydrofolate + NADPH. It catalyses the reaction (6R)-5,10-methenyltetrahydrofolate + H2O = (6R)-10-formyltetrahydrofolate + H(+). The protein operates within one-carbon metabolism; tetrahydrofolate interconversion. Functionally, catalyzes the oxidation of 5,10-methylenetetrahydrofolate to 5,10-methenyltetrahydrofolate and then the hydrolysis of 5,10-methenyltetrahydrofolate to 10-formyltetrahydrofolate. The sequence is that of Bifunctional protein FolD from Acidobacterium capsulatum (strain ATCC 51196 / DSM 11244 / BCRC 80197 / JCM 7670 / NBRC 15755 / NCIMB 13165 / 161).